We begin with the raw amino-acid sequence, 515 residues long: 2-isopropylmalate synthase (515 aa).

One can recognise a Pyruvate carboxyltransferase domain in the interval valine 5–valine 268. 4 residues coordinate Mn(2+): aspartate 14, histidine 202, histidine 204, and asparagine 239. The regulatory domain stretch occupies residues histidine 394–proline 515.

It belongs to the alpha-IPM synthase/homocitrate synthase family. LeuA type 1 subfamily. As to quaternary structure, homodimer. Mn(2+) is required as a cofactor.

It is found in the cytoplasm. The enzyme catalyses 3-methyl-2-oxobutanoate + acetyl-CoA + H2O = (2S)-2-isopropylmalate + CoA + H(+). Its pathway is amino-acid biosynthesis; L-leucine biosynthesis; L-leucine from 3-methyl-2-oxobutanoate: step 1/4. In terms of biological role, catalyzes the condensation of the acetyl group of acetyl-CoA with 3-methyl-2-oxobutanoate (2-ketoisovalerate) to form 3-carboxy-3-hydroxy-4-methylpentanoate (2-isopropylmalate). The protein is 2-isopropylmalate synthase of Polynucleobacter asymbioticus (strain DSM 18221 / CIP 109841 / QLW-P1DMWA-1) (Polynucleobacter necessarius subsp. asymbioticus).